The chain runs to 179 residues: ATP synthase subunit delta (179 aa).

Belongs to the ATPase delta chain family. As to quaternary structure, F-type ATPases have 2 components, F(1) - the catalytic core - and F(0) - the membrane proton channel. F(1) has five subunits: alpha(3), beta(3), gamma(1), delta(1), epsilon(1). F(0) has three main subunits: a(1), b(2) and c(10-14). The alpha and beta chains form an alternating ring which encloses part of the gamma chain. F(1) is attached to F(0) by a central stalk formed by the gamma and epsilon chains, while a peripheral stalk is formed by the delta and b chains.

It localises to the cell inner membrane. In terms of biological role, f(1)F(0) ATP synthase produces ATP from ADP in the presence of a proton or sodium gradient. F-type ATPases consist of two structural domains, F(1) containing the extramembraneous catalytic core and F(0) containing the membrane proton channel, linked together by a central stalk and a peripheral stalk. During catalysis, ATP synthesis in the catalytic domain of F(1) is coupled via a rotary mechanism of the central stalk subunits to proton translocation. Its function is as follows. This protein is part of the stalk that links CF(0) to CF(1). It either transmits conformational changes from CF(0) to CF(1) or is implicated in proton conduction. The sequence is that of ATP synthase subunit delta from Paraburkholderia phymatum (strain DSM 17167 / CIP 108236 / LMG 21445 / STM815) (Burkholderia phymatum).